The sequence spans 160 residues: Small ribosomal subunit protein bS6 (160 aa).

Belongs to the bacterial ribosomal protein bS6 family.

In terms of biological role, binds together with bS18 to 16S ribosomal RNA. The polypeptide is Small ribosomal subunit protein bS6 (Ureaplasma parvum serovar 3 (strain ATCC 27815 / 27 / NCTC 11736)).